A 303-amino-acid polypeptide reads, in one-letter code: Pseudouridine-5'-phosphate glycosidase (303 aa).

The active-site Proton donor is the E25. Substrate-binding residues include K87 and V107. Residue D139 coordinates Mn(2+). 141 to 143 (SAD) is a substrate binding site. K160 (nucleophile) is an active-site residue.

It belongs to the pseudouridine-5'-phosphate glycosidase family. Homotrimer. The cofactor is Mn(2+).

The enzyme catalyses D-ribose 5-phosphate + uracil = psi-UMP + H2O. In terms of biological role, catalyzes the reversible cleavage of pseudouridine 5'-phosphate (PsiMP) to ribose 5-phosphate and uracil. Functions biologically in the cleavage direction, as part of a pseudouridine degradation pathway. This chain is Pseudouridine-5'-phosphate glycosidase, found in Hahella chejuensis (strain KCTC 2396).